The primary structure comprises 298 residues: Urease accessory protein UreD 3 (298 aa).

Positions 1–30 (MADEAGTRSAGGRPIPAAEPLRPALSRQRS) are disordered.

It belongs to the UreD family. UreD, UreF and UreG form a complex that acts as a GTP-hydrolysis-dependent molecular chaperone, activating the urease apoprotein by helping to assemble the nickel containing metallocenter of UreC. The UreE protein probably delivers the nickel.

Its subcellular location is the cytoplasm. Required for maturation of urease via the functional incorporation of the urease nickel metallocenter. This chain is Urease accessory protein UreD 3, found in Methylorubrum extorquens (strain PA1) (Methylobacterium extorquens).